Here is a 724-residue protein sequence, read N- to C-terminus: Protein BCH1 (724 aa).

Over residues 51–65 (TTATASANDNGATSN) the composition is skewed to low complexity. Positions 51–71 (TTATASANDNGATSNINGQDP) are disordered. The interval 711–724 (LNFLKNFTNDTFDN) is CHS5-binding.

The protein belongs to the CHAPS family. Component of the CHS5/6 complex composed of the 4 CHAPS proteins BCH1, BCH2, BUD7, and CHS6 as well as at least CHS5 and GTP-bound ARF1. The complex interacts with the cargo protein CHS3.

Its subcellular location is the golgi apparatus. It is found in the trans-Golgi network membrane. Its function is as follows. Member of the CHS5-ARF1P-binding proteins (CHAPS) which mediates export of specific cargo proteins, including chitin synthase CHS3. This Saccharomyces cerevisiae (strain ATCC 204508 / S288c) (Baker's yeast) protein is Protein BCH1 (BCH1).